Reading from the N-terminus, the 348-residue chain is Holliday junction branch migration complex subunit RuvB (348 aa).

Residues 4–186 (TDRIISANTV…FGIIQRLEFY (183 aa)) form a large ATPase domain (RuvB-L) region. ATP is bound by residues Ile25, Arg26, Gly67, Lys70, Thr71, Thr72, 133–135 (EDY), Arg176, Tyr186, and Arg223. Thr71 contributes to the Mg(2+) binding site. Residues 187-257 (SVDDLAKIVY…IADKALTMLK (71 aa)) form a small ATPAse domain (RuvB-S) region. Residues 260–348 (PVGFDHMDHK…SSDQQQNLSL (89 aa)) form a head domain (RuvB-H) region. 2 residues coordinate DNA: Arg315 and Arg320.

The protein belongs to the RuvB family. As to quaternary structure, homohexamer. Forms an RuvA(8)-RuvB(12)-Holliday junction (HJ) complex. HJ DNA is sandwiched between 2 RuvA tetramers; dsDNA enters through RuvA and exits via RuvB. An RuvB hexamer assembles on each DNA strand where it exits the tetramer. Each RuvB hexamer is contacted by two RuvA subunits (via domain III) on 2 adjacent RuvB subunits; this complex drives branch migration. In the full resolvosome a probable DNA-RuvA(4)-RuvB(12)-RuvC(2) complex forms which resolves the HJ.

The protein localises to the cytoplasm. The enzyme catalyses ATP + H2O = ADP + phosphate + H(+). In terms of biological role, the RuvA-RuvB-RuvC complex processes Holliday junction (HJ) DNA during genetic recombination and DNA repair, while the RuvA-RuvB complex plays an important role in the rescue of blocked DNA replication forks via replication fork reversal (RFR). RuvA specifically binds to HJ cruciform DNA, conferring on it an open structure. The RuvB hexamer acts as an ATP-dependent pump, pulling dsDNA into and through the RuvAB complex. RuvB forms 2 homohexamers on either side of HJ DNA bound by 1 or 2 RuvA tetramers; 4 subunits per hexamer contact DNA at a time. Coordinated motions by a converter formed by DNA-disengaged RuvB subunits stimulates ATP hydrolysis and nucleotide exchange. Immobilization of the converter enables RuvB to convert the ATP-contained energy into a lever motion, pulling 2 nucleotides of DNA out of the RuvA tetramer per ATP hydrolyzed, thus driving DNA branch migration. The RuvB motors rotate together with the DNA substrate, which together with the progressing nucleotide cycle form the mechanistic basis for DNA recombination by continuous HJ branch migration. Branch migration allows RuvC to scan DNA until it finds its consensus sequence, where it cleaves and resolves cruciform DNA. This Francisella philomiragia subsp. philomiragia (strain ATCC 25017 / CCUG 19701 / FSC 153 / O#319-036) protein is Holliday junction branch migration complex subunit RuvB.